The primary structure comprises 533 residues: uncharacterized protein (533 aa).

The N-terminal stretch at Met-1 to Ala-21 is a signal peptide. Cys-22 carries N-palmitoyl cysteine lipidation. A lipid anchor (S-diacylglycerol cysteine) is attached at Cys-22. A disordered region spans residues Leu-91–Thr-111. Polar residues predominate over residues Gly-97–Thr-111.

The protein belongs to the MG067/MG068/MG395 family.

It localises to the cell membrane. This is an uncharacterized protein from Mycoplasma pneumoniae (strain ATCC 29342 / M129 / Subtype 1) (Mycoplasmoides pneumoniae).